The primary structure comprises 307 residues: D-alanine--D-alanine ligase (307 aa).

Positions 101–301 constitute an ATP-grasp domain; it reads KTVMRAAGVS…FGELVRWMVE (201 aa). 127–182 is an ATP binding site; it reads PLTPPYVVKPIAEGSSMGVIIVREERSHPPQILASDEWVYGEEVLAETYIAGRELT. Residues D251, E268, and N270 each contribute to the Mg(2+) site.

It belongs to the D-alanine--D-alanine ligase family. Requires Mg(2+) as cofactor. It depends on Mn(2+) as a cofactor.

The protein resides in the cytoplasm. It carries out the reaction 2 D-alanine + ATP = D-alanyl-D-alanine + ADP + phosphate + H(+). Its pathway is cell wall biogenesis; peptidoglycan biosynthesis. In terms of biological role, cell wall formation. The sequence is that of D-alanine--D-alanine ligase from Methylorubrum populi (strain ATCC BAA-705 / NCIMB 13946 / BJ001) (Methylobacterium populi).